The chain runs to 533 residues: DNA-directed RNA polymerase III subunit RPC3 (533 aa).

The tract at residues 161-183 (PLVPDTDSSDPGPPPPAPNLVIN) is disordered. S194 carries the phosphoserine modification. The segment at 197–228 (GKGKRRRSSDEDAAGEPKAKKPRCTDNEEPTP) is disordered. The segment covering 211-222 (GEPKAKKPRCTD) has biased composition (basic and acidic residues).

This sequence belongs to the eukaryotic RPC3/POLR3C RNA polymerase subunit family. Component of the RNA polymerase III complex consisting of 17 subunits: a ten-subunit horseshoe-shaped catalytic core composed of POLR3A/RPC1, POLR3B/RPC2, POLR1C/RPAC1, POLR1D/RPAC2, POLR3K/RPC10, POLR2E/RPABC1, POLR2F/RPABC2, POLR2H/RPABC3, POLR2K/RPABC4 and POLR2L/RPABC5; a mobile stalk composed of two subunits POLR3H/RPC8 and CRCP/RPC9, protruding from the core and functioning primarily in transcription initiation; and additional subunits homologous to general transcription factors of the RNA polymerase II machinery, POLR3C/RPC3-POLR3F/RPC6-POLR3G/RPC7 heterotrimer required for transcription initiation and POLR3D/RPC4-POLR3E/RPC5 heterodimer involved in both transcription initiation and termination. Directly interacts with POLR3G/RPC7 and POLR3GL. Directly interacts with POLR3F/RPC6. Interacts with GTF3C4. As part of the RNA polymerase III complex, interacts with PKP2.

The protein localises to the nucleus. Its function is as follows. DNA-dependent RNA polymerase catalyzes the transcription of DNA into RNA using the four ribonucleoside triphosphates as substrates. Specific peripheric component of RNA polymerase III (Pol III) which synthesizes small non-coding RNAs including 5S rRNA, snRNAs, tRNAs and miRNAs from at least 500 distinct genomic loci. Part of POLR3C/RPC3-POLR3F/RPC6-POLR3G/RPC7 heterotrimer, coordinates the dynamics of Pol III stalk and clamp modules during the transition from apo to elongation state. Pol III plays a key role in sensing and limiting infection by intracellular bacteria and DNA viruses. Acts as a nuclear and cytosolic DNA sensor involved in innate immune response. Can sense non-self dsDNA that serves as template for transcription into dsRNA. The non-self RNA polymerase III transcripts, such as Epstein-Barr virus-encoded RNAs (EBERs) induce type I interferon and NF-kappa-B through the RIG-I pathway. Preferentially binds single-stranded DNA (ssDNA) in a sequence-independent manner. This is DNA-directed RNA polymerase III subunit RPC3 from Rattus norvegicus (Rat).